Reading from the N-terminus, the 459-residue chain is Zinc finger transcription factor lin-29 (459 aa).

Residues 1 to 14 (MDQTVLDSAFNSPV) show a composition bias toward polar residues. Residues 1-73 (MDQTVLDSAF…GSTGSTPAHH (73 aa)) form a disordered region. Over residues 16–56 (SGIAGTTTGSGSTTHFGVGTNFKVSVRSSSRSTDGTDSTDG) the composition is skewed to low complexity. Residues 57–73 (ANSDNVTGSTGSTPAHH) show a composition bias toward polar residues. C2H2-type zinc fingers lie at residues 151 to 173 (YKCT…MRIH), 180 to 202 (GPCN…IRTH), 208 to 232 (YKCK…SRCH), 238 to 260 (FKCN…IPKH), and 269 to 291 (HICP…MTKH). The interval 390-406 (PGFNMITPLENIQRYNG) is interacts with mab-10. Positions 423-444 (VSSTPSSTSSSSAGSSSSQGGV) are enriched in low complexity. The interval 423 to 459 (VSSTPSSTSSSSAGSSSSQGGVFNPQSLINNMKNHSY) is disordered. Residues 446–459 (NPQSLINNMKNHSY) are compositionally biased toward polar residues.

Interacts (via C-terminus) with transcription cofactor mab-10. As to expression, expressed in lateral hypodermal seam cells (at protein level).

Its subcellular location is the nucleus. Transcription factor which regulates the expression of various genes, including those involved in cuticle synthesis and maintenance, such as collagens, and in lipid metabolism. Binds to promoter regions of genes, at 5'-[(T/G)TTTTTT(A/T/C/G)]-3' consensus sequences. Heterochronic protein which controls the choice of stage specific cell fates, including at the juvenile to adult transition. Promotes differentiation, together with transcriptional cofactor mab-10, perhaps as part of a transcriptional complex. Required for vulval morphogenesis and egg laying; perhaps by acting in a subset of the lateral seam cells. Involved in the exit of seam cells from the cell cycle. Required for specification of uterine pi-cell fate, acting upstream of lin-12 Notch signaling, perhaps via maintenance of lag-2 expression in the anchor cell (AC). Involved in morphogenesis of the specialized male tail used in mating. Acts cell non-autonomously from the hypodermis to regulate expression of genes in the intestine, including genes involved in lipid metabolism. May regulate vitellogenesis via the mTORC2 signaling mediated pathway, independently of daf-16. May promote nuclear accumulation of mab-10 in seam cells post-transcriptionally. Dispensable for seam cell fusion. Functionally, required for seam cell fusion. The protein is Zinc finger transcription factor lin-29 of Caenorhabditis elegans.